We begin with the raw amino-acid sequence, 264 residues long: 3-methyl-2-oxobutanoate hydroxymethyltransferase (264 aa).

Residues Asp-45 and Asp-84 each coordinate Mg(2+). 3-methyl-2-oxobutanoate-binding positions include Asp-45–Ser-46, Asp-84, and Lys-112. Glu-114 is a binding site for Mg(2+). The Proton acceptor role is filled by Glu-181.

This sequence belongs to the PanB family. Homodecamer; pentamer of dimers. It depends on Mg(2+) as a cofactor.

Its subcellular location is the cytoplasm. The catalysed reaction is 3-methyl-2-oxobutanoate + (6R)-5,10-methylene-5,6,7,8-tetrahydrofolate + H2O = 2-dehydropantoate + (6S)-5,6,7,8-tetrahydrofolate. Its pathway is cofactor biosynthesis; (R)-pantothenate biosynthesis; (R)-pantoate from 3-methyl-2-oxobutanoate: step 1/2. Functionally, catalyzes the reversible reaction in which hydroxymethyl group from 5,10-methylenetetrahydrofolate is transferred onto alpha-ketoisovalerate to form ketopantoate. The protein is 3-methyl-2-oxobutanoate hydroxymethyltransferase of Escherichia coli O81 (strain ED1a).